A 199-amino-acid chain; its full sequence is MAKVLVLYYSAYGHIEKMAYAVAEGAKSAGAEVTVKRVPELVPEEVAKASYFKLDQEAPIATPDELAEYDAIIVGAGTRFGTVASQMRNFWDQTGGLWFSGKLVGKVGSVFTSSATQHGGQESTILGFIPTLLHHGMAVVGLPYAFAGQMGTEEVKGGSPYGASTITNGDGSRQPSEIELEAAKYQGAHVAKIAAKLVA.

Residues 4-190 (VLVLYYSAYG…EAAKYQGAHV (187 aa)) form the Flavodoxin-like domain. FMN-binding positions include 10 to 15 (SAYGHI) and 78 to 80 (TRF). Tyrosine 12 serves as a coordination point for NAD(+). Residue tryptophan 98 coordinates substrate. Residues 113-119 (SSATQHG) and histidine 134 each bind FMN.

The protein belongs to the WrbA family. The cofactor is FMN.

The enzyme catalyses a quinone + NADH + H(+) = a quinol + NAD(+). It carries out the reaction a quinone + NADPH + H(+) = a quinol + NADP(+). The protein is NAD(P)H dehydrogenase (quinone) of Rhizobium rhizogenes (strain K84 / ATCC BAA-868) (Agrobacterium radiobacter).